Reading from the N-terminus, the 210-residue chain is Uracil phosphoribosyltransferase (210 aa).

5-phospho-alpha-D-ribose 1-diphosphate-binding positions include arginine 78, arginine 103, and 130–138 (DPMLATGGT). Uracil is bound by residues isoleucine 193 and 198–200 (GDA). Position 199 (aspartate 199) interacts with 5-phospho-alpha-D-ribose 1-diphosphate.

It belongs to the UPRTase family. Requires Mg(2+) as cofactor.

It carries out the reaction UMP + diphosphate = 5-phospho-alpha-D-ribose 1-diphosphate + uracil. It participates in pyrimidine metabolism; UMP biosynthesis via salvage pathway; UMP from uracil: step 1/1. With respect to regulation, allosterically activated by GTP. In terms of biological role, catalyzes the conversion of uracil and 5-phospho-alpha-D-ribose 1-diphosphate (PRPP) to UMP and diphosphate. In Stenotrophomonas maltophilia (strain K279a), this protein is Uracil phosphoribosyltransferase.